A 139-amino-acid chain; its full sequence is UDP-glucose 4-epimerase (139 aa).

NAD(+) contacts are provided by residues 11-12 (YI), 31-36 (DNLCNS), 58-59 (DI), 80-84 (FAGLK), Asn-99, and Ser-124. Ser-124 contributes to the substrate binding site. Catalysis depends on Tyr-136, which acts as the Proton acceptor.

Belongs to the NAD(P)-dependent epimerase/dehydratase family. As to quaternary structure, homodimer. Requires NAD(+) as cofactor.

The enzyme catalyses UDP-alpha-D-glucose = UDP-alpha-D-galactose. Its pathway is carbohydrate metabolism; galactose metabolism. In terms of biological role, involved in the metabolism of galactose. Catalyzes the conversion of UDP-galactose (UDP-Gal) to UDP-glucose (UDP-Glc) through a mechanism involving the transient reduction of NAD. The chain is UDP-glucose 4-epimerase (galE) from Klebsiella pneumoniae.